We begin with the raw amino-acid sequence, 622 residues long: MPPTQAESVIKNIIREIGQECAAHGEITSETVVAFMVKAVVLDPSNGFNMDRTLVKTDVQKLVKLCVARLLDNKNPSLDTIKMQVYFDMNYTSREDFLEEHHRVLESRLGIVSREITDTRACAKEELENLYRKIVSYVLLRSGLGSPTDIKIVREATAALQSVFPQAELCTFLTLSKKDKERQLKELTMIVTGIRLFNRDCGKGGEGIDDLPAILLEAIPATTHHIDSQLQIAQEQAFRYTAIIEKVTNNPLMAKELQPYMLKEALYNVRQYEIFLQTVLSDIITCAEEVELMTKQLAAQLEQLKMTVKSKTAVPTSQVFPIFIALASLWTSFQDETVLISVLSNLTTNLELFLGTHDLLFPEKVMQGLLDGVIVKTDMTRIEEHLEEKVQLADFRVLEWLFPETTANFNKLLIQYRGFCGYTFAVTDGLLLPGNPTIGILKYKEKYYTFNSRDAAYSFAENPDHYINLIKEKAKKNAELIQLLELHQQFETLIPYSQMKDVDKHFIKPITKCENGTQTDTHILPPTIVRSYEWNEWELRRKAIQLANLRQKMTHSVQTDLSHMRRDNASQVYPLKEVGTQSKREGSTRVPRPQIFIAGLRGGQSKTTHGVKINLTRAVDET.

Belongs to the CFAP206 family.

Its subcellular location is the cytoplasm. It localises to the cytoskeleton. It is found in the cilium axoneme. The protein localises to the cilium basal body. In terms of biological role, essential for sperm motility and is involved in the regulation of the beating frequency of motile cilia on the epithelial cells of the respiratory tract. Required for the establishment of radial spokes in sperm flagella. This is Cilia- and flagella-associated protein 206 from Rattus norvegicus (Rat).